The chain runs to 411 residues: Putative glycosyltransferase SCO3672 (411 aa).

10 helical membrane passes run 7 to 27, 45 to 65, 70 to 90, 120 to 140, 148 to 168, 169 to 189, 197 to 217, 227 to 247, 277 to 297, and 301 to 321; these read IAAA…LAAL, PVPL…AWAG, VVPL…VGAL, ETGP…TGAF, GVVG…AAVE, LMDG…GFLL, IALG…AAVL, GAGV…LVLL, GVVV…VLAH, and VGGQ…LGLL.

It belongs to the glycosyltransferase 4 family.

Its subcellular location is the cell membrane. This Streptomyces coelicolor (strain ATCC BAA-471 / A3(2) / M145) protein is Putative glycosyltransferase SCO3672.